A 622-amino-acid polypeptide reads, in one-letter code: Modification methylase LlaI (622 aa).

The protein belongs to the N(4)/N(6)-methyltransferase family.

The catalysed reaction is a 2'-deoxyadenosine in DNA + S-adenosyl-L-methionine = an N(6)-methyl-2'-deoxyadenosine in DNA + S-adenosyl-L-homocysteine + H(+). An alpha subtype methylase that modifies unknown specific adenine residues, and protects the DNA from cleavage by the LlaI endonuclease. The protein is Modification methylase LlaI of Lactococcus lactis subsp. lactis (Streptococcus lactis).